A 117-amino-acid chain; its full sequence is Large ribosomal subunit protein uL18 (117 aa).

This sequence belongs to the universal ribosomal protein uL18 family. In terms of assembly, part of the 50S ribosomal subunit; part of the 5S rRNA/L5/L18/L25 subcomplex. Contacts the 5S and 23S rRNAs.

This is one of the proteins that bind and probably mediate the attachment of the 5S RNA into the large ribosomal subunit, where it forms part of the central protuberance. This chain is Large ribosomal subunit protein uL18, found in Aliivibrio fischeri (strain ATCC 700601 / ES114) (Vibrio fischeri).